A 440-amino-acid chain; its full sequence is Histidinol dehydrogenase (440 aa).

Residues Tyr-139, Gln-200, and Asn-223 each coordinate NAD(+). Residues Ser-246, Gln-268, and His-271 each coordinate substrate. Zn(2+)-binding residues include Gln-268 and His-271. Active-site proton acceptor residues include Glu-336 and His-337. 4 residues coordinate substrate: His-337, Asp-370, Glu-424, and His-429. Residue Asp-370 coordinates Zn(2+). His-429 contributes to the Zn(2+) binding site.

This sequence belongs to the histidinol dehydrogenase family. The cofactor is Zn(2+).

It catalyses the reaction L-histidinol + 2 NAD(+) + H2O = L-histidine + 2 NADH + 3 H(+). The protein operates within amino-acid biosynthesis; L-histidine biosynthesis; L-histidine from 5-phospho-alpha-D-ribose 1-diphosphate: step 9/9. Its function is as follows. Catalyzes the sequential NAD-dependent oxidations of L-histidinol to L-histidinaldehyde and then to L-histidine. The polypeptide is Histidinol dehydrogenase (Bordetella bronchiseptica (strain ATCC BAA-588 / NCTC 13252 / RB50) (Alcaligenes bronchisepticus)).